A 456-amino-acid chain; its full sequence is Two pore potassium channel c (456 aa).

The span at 1 to 19 (MDTEPLLSPLSPSPHLLHP) shows a compositional bias: low complexity. Residues 1–112 (MDTEPLLSPL…PPSLFDFIGG (112 aa)) form a disordered region. Residues 1 to 152 (MDTEPLLSPL…RNPPPPPRRP (152 aa)) are Cytoplasmic-facing. Residues 52-67 (HPPPPPPPPPPPPPPP) are compositionally biased toward pro residues. Residues 153 to 173 (AIVLHAFLFLLAYLAMGVTFY) traverse the membrane as a helical segment. Positions 192 to 211 (DALYFCIVTLCTIGYGDITP) form an intramembrane region, pore-forming. Residues 223–243 (FVLIGFGFVDILLSGMVSYVL) form a helical membrane-spanning segment. Topologically, residues 244–279 (DLQEHLLITALKNPRSVRKHRHNYIFDLKKGRMRVR) are cytoplasmic. Residues 280–300 (MKVALALTVVAICVGVGAAVL) traverse the membrane as a helical segment. Residues 310–329 (DAVYLAVMSVTTVGYGDHAF) constitute an intramembrane region (pore-forming). Residues 336–356 (LFASAWLLVSTLAVARAFLYL) form a helical membrane-spanning segment. Over 357 to 456 (AEMRIDKRHR…LNEKKKGKKS (100 aa)) the chain is Cytoplasmic. EF-hand domains follow at residues 373–408 (LSRD…EMGK) and 412–447 (KDIM…VTDL). Residues D386, D388, N390, Y392, E397, D425, K431, and D436 each coordinate Ca(2+).

Belongs to the two pore domain potassium channel (TC 1.A.1.7) family. As to quaternary structure, homodimer.

It is found in the membrane. In terms of biological role, inward-rectifying potassium channel. The chain is Two pore potassium channel c (TPKC) from Oryza sativa subsp. japonica (Rice).